A 315-amino-acid polypeptide reads, in one-letter code: Mitochondrial glycine transporter (315 aa).

Solcar repeat units follow at residues 19-102, 125-206, and 221-305; these read SKTT…LRTG, TANL…LKRR, and KSSS…LILR. A run of 6 helical transmembrane segments spans residues 25–50, 77–103, 128–153, 181–204, 225–251, and 280–298; these read FTAG…TRVQ, GTLP…RTGL, LATG…VRYE, GFGA…EQLK, INFV…KTRL, and GLGL…AWTV.

The protein belongs to the mitochondrial carrier (TC 2.A.29) family. SLC25A38 subfamily.

Its subcellular location is the mitochondrion inner membrane. The catalysed reaction is glycine(in) = glycine(out). In terms of biological role, mitochondrial glycine transporter that imports glycine into the mitochondrial matrix. Plays an important role in providing glycine for the first enzymatic step in heme biosynthesis, the condensation of glycine with succinyl-CoA to produce 5-aminolevulinate (ALA) in the mitochondrial matrix. The protein is Mitochondrial glycine transporter of Aspergillus niger (strain ATCC MYA-4892 / CBS 513.88 / FGSC A1513).